The sequence spans 385 residues: Putative cell agglutination protein pfl8 (385 aa).

Positions 1-20 are cleaved as a signal peptide; that stretch reads MNSYISLIFTLLFFTSAARS. Positions 41–90 are disordered; the sequence is SSEFTSTITPETPSSSSSTFVPISTHTSSATNTTSGQLSISSSSSTSSEY. Asparagine 72, asparagine 270, and asparagine 346 each carry an N-linked (GlcNAc...) asparagine glycan. The 165-residue stretch at 196-360 folds into the PA14 domain; that stretch reads EVSTFNKPAY…GPVRTTSYSY (165 aa).

Its subcellular location is the secreted. It is found in the cell surface. In terms of biological role, may be involved in agglutination during conjugation or other aspects of colony formation. Induces flocculation when overexpressed. The sequence is that of Putative cell agglutination protein pfl8 from Schizosaccharomyces pombe (strain 972 / ATCC 24843) (Fission yeast).